Here is a 694-residue protein sequence, read N- to C-terminus: MARSVPLEKVRNIGIAAHIDAGKTTTTERILFYSGVVHKIGEVHDGNAVTDWMEQERERGITITAAAISTSWKDYRVNIIDTPGHVDFTIEVERSMRVLDGVVAVFCSVGGVQPQSETVWRQADRYSVPRIVFVNKMDRTGADFFKVYGQIRDRVRANAVPIQIPIGAESDFQGIVDLVEMKAHIYTNDLGTDILVTDIPAELQETAAEWRSKMVEAVAETDEALLDKYFEDGDLSIEDIKAGLRKGVLIQGNDRLVPMLCGSAFKNKGVQLLLDAVVELLPSPQDIPPIQGTLPDGEVALRPSSDEAPFSALAFKIMADPYGRLTFVRVYSGILQKGSYVYNATKGKKERVSRLIILKADDRIEVDELRAGDLGAVLGLKDTFTGDTLCDDQNPIILESLFIPEPVISVAVEPKTKNDMEKLSKALQALSEEDPTFRVSVDSETNQTVIAGMGELHLEILVDRMLREYKVEANIGAPQVAYRETVRKAVKAEGKFVRQSGGKGQYGHVVIELEPAEPGTGFEFVSKIVGGTVPKEYVGPAEQGMKETCESGVLAGYPLIDIKATLVDGSYHDVDSSEMAFKIAGSMAIKEAVRKADPVLLEPVMKVEVEVPEDFLGSVMGNLISRRGQIEGQATTNGTATVSAKVPLAEMFGYATDLRSMTQGRGIFTMEFSQYEEVPRNVAETIIAKNKGNA.

A tr-type G domain is found at 8–285; sequence EKVRNIGIAA…AVVELLPSPQ (278 aa). GTP is bound by residues 17 to 24, 81 to 85, and 135 to 138; these read AHIDAGKT, DTPGH, and NKMD.

It belongs to the TRAFAC class translation factor GTPase superfamily. Classic translation factor GTPase family. EF-G/EF-2 subfamily.

It localises to the cytoplasm. Catalyzes the GTP-dependent ribosomal translocation step during translation elongation. During this step, the ribosome changes from the pre-translocational (PRE) to the post-translocational (POST) state as the newly formed A-site-bound peptidyl-tRNA and P-site-bound deacylated tRNA move to the P and E sites, respectively. Catalyzes the coordinated movement of the two tRNA molecules, the mRNA and conformational changes in the ribosome. The chain is Elongation factor G (fusA) from Synechococcus sp. (strain ATCC 27144 / PCC 6301 / SAUG 1402/1) (Anacystis nidulans).